The chain runs to 148 residues: Sporulation inhibitor of replication protein SirA (148 aa).

This sequence belongs to the SirA family. Interacts with DnaA. Forms a 1:1 complex with domain I of DnaA.

It localises to the cytoplasm. In terms of biological role, inhibits DNA replication initiation during sporulation, preventing overinitiation and thus enforcing diploidy; probably the main regulator of sporulation replication initiation under Spo0A control. During sporulation SirA prevents DnaA association with the replication origin to prevent excessive chromosome replication. Alternatively SirA binds to domain I of DnaA and prevent its interaction with DnaD, preventing DNA replication initiation. Upon ectopic expression during vegetative growth reduces chromosome copy number, leading to elongated cells with that can have a single nucleoid or be anucleate. Ectopic expression during vegetative growth blocks DnaA at oriC while blocking recruitment of DnaD to oriC. Plays a significant role during the onset of sporulation. This Bacillus subtilis (strain 168) protein is Sporulation inhibitor of replication protein SirA.